Reading from the N-terminus, the 295-residue chain is ATP synthase gamma chain (295 aa).

It belongs to the ATPase gamma chain family. As to quaternary structure, F-type ATPases have 2 components, CF(1) - the catalytic core - and CF(0) - the membrane proton channel. CF(1) has five subunits: alpha(3), beta(3), gamma(1), delta(1), epsilon(1). CF(0) has three main subunits: a, b and c.

It is found in the cell inner membrane. Functionally, produces ATP from ADP in the presence of a proton gradient across the membrane. The gamma chain is believed to be important in regulating ATPase activity and the flow of protons through the CF(0) complex. This is ATP synthase gamma chain from Campylobacter concisus (strain 13826).